Reading from the N-terminus, the 293-residue chain is NAD kinase (293 aa).

Residue Asp74 is the Proton acceptor of the active site. NAD(+)-binding positions include Asp74–Gly75, Arg79, Asn148–Glu149, Arg176, Asp178, Thr189–Ser194, and Gln248.

The protein belongs to the NAD kinase family. Requires a divalent metal cation as cofactor.

Its subcellular location is the cytoplasm. It carries out the reaction NAD(+) + ATP = ADP + NADP(+) + H(+). Functionally, involved in the regulation of the intracellular balance of NAD and NADP, and is a key enzyme in the biosynthesis of NADP. Catalyzes specifically the phosphorylation on 2'-hydroxyl of the adenosine moiety of NAD to yield NADP. This Blochmanniella floridana protein is NAD kinase.